The sequence spans 303 residues: UDP-3-O-acyl-N-acetylglucosamine deacetylase (303 aa).

The Zn(2+) site is built by histidine 78, histidine 237, and aspartate 241. Histidine 264 serves as the catalytic Proton donor.

Belongs to the LpxC family. Zn(2+) is required as a cofactor.

The enzyme catalyses a UDP-3-O-[(3R)-3-hydroxyacyl]-N-acetyl-alpha-D-glucosamine + H2O = a UDP-3-O-[(3R)-3-hydroxyacyl]-alpha-D-glucosamine + acetate. It functions in the pathway glycolipid biosynthesis; lipid IV(A) biosynthesis; lipid IV(A) from (3R)-3-hydroxytetradecanoyl-[acyl-carrier-protein] and UDP-N-acetyl-alpha-D-glucosamine: step 2/6. Functionally, catalyzes the hydrolysis of UDP-3-O-myristoyl-N-acetylglucosamine to form UDP-3-O-myristoylglucosamine and acetate, the committed step in lipid A biosynthesis. The sequence is that of UDP-3-O-acyl-N-acetylglucosamine deacetylase from Pseudomonas putida (strain GB-1).